A 107-amino-acid polypeptide reads, in one-letter code: Small integral membrane protein 19 (107 aa).

The chain crosses the membrane as a helical span at residues 25–43; that stretch reads ATNVYLIVILVSFGLFMYA. The tract at residues 88-107 is disordered; the sequence is RKYEYQQPQSQADSVQLSLE. Residues 93–107 are compositionally biased toward polar residues; that stretch reads QQPQSQADSVQLSLE.

The protein belongs to the SMIM19 family.

It localises to the membrane. The polypeptide is Small integral membrane protein 19 (Smim19) (Mus musculus (Mouse)).